Here is a 240-residue protein sequence, read N- to C-terminus: uncharacterized protein (240 aa).

Residues 197–210 (PLKSHSASRLNHLT) show a composition bias toward polar residues. Residues 197 to 222 (PLKSHSASRLNHLTPSPRPGETPLEN) form a disordered region.

This is an uncharacterized protein from Caenorhabditis elegans.